The primary structure comprises 377 residues: Histidine protein methyltransferase 1 (377 aa).

This sequence belongs to the methyltransferase superfamily. METTL18 family.

The protein resides in the cytoplasm. The protein localises to the nucleus. It carries out the reaction L-histidyl-[protein] + S-adenosyl-L-methionine = N(tele)-methyl-L-histidyl-[protein] + S-adenosyl-L-homocysteine + H(+). Functionally, protein-histidine N-methyltransferase that mediates methylation of RPL3 at 'His-243'. Methylates ribosome-associated RPL3, but not free RPL3, thereby regulating 60S subunit assembly. In addition to RPL3, mediates His methylation of other proteins. This Saccharomyces cerevisiae (strain ATCC 204508 / S288c) (Baker's yeast) protein is Histidine protein methyltransferase 1.